We begin with the raw amino-acid sequence, 87 residues long: Phosphoribosyl-ATP pyrophosphatase (87 aa).

The protein belongs to the PRA-PH family.

The protein resides in the cytoplasm. It carries out the reaction 1-(5-phospho-beta-D-ribosyl)-ATP + H2O = 1-(5-phospho-beta-D-ribosyl)-5'-AMP + diphosphate + H(+). It functions in the pathway amino-acid biosynthesis; L-histidine biosynthesis; L-histidine from 5-phospho-alpha-D-ribose 1-diphosphate: step 2/9. The sequence is that of Phosphoribosyl-ATP pyrophosphatase from Beutenbergia cavernae (strain ATCC BAA-8 / DSM 12333 / CCUG 43141 / JCM 11478 / NBRC 16432 / NCIMB 13614 / HKI 0122).